The following is a 149-amino-acid chain: MRAVVQRVKRSKVEVDGKIIGEIGKGLNVLLGISVEDKKEDISYMKDKILNLRIFEDEEGKLNKSLLDVQGELLIISQFTLYGDCRKGRRPSFIKALGGEKARSVYNEFIDQCKDSVHNVQTGEFGADMLVSIENDGPVTIMVDSEKIF.

Residues 137 to 138 (GP) carry the Gly-cisPro motif, important for rejection of L-amino acids motif.

It belongs to the DTD family. Homodimer.

The protein localises to the cytoplasm. It carries out the reaction glycyl-tRNA(Ala) + H2O = tRNA(Ala) + glycine + H(+). The catalysed reaction is a D-aminoacyl-tRNA + H2O = a tRNA + a D-alpha-amino acid + H(+). Its function is as follows. An aminoacyl-tRNA editing enzyme that deacylates mischarged D-aminoacyl-tRNAs. Also deacylates mischarged glycyl-tRNA(Ala), protecting cells against glycine mischarging by AlaRS. Acts via tRNA-based rather than protein-based catalysis; rejects L-amino acids rather than detecting D-amino acids in the active site. By recycling D-aminoacyl-tRNA to D-amino acids and free tRNA molecules, this enzyme counteracts the toxicity associated with the formation of D-aminoacyl-tRNA entities in vivo and helps enforce protein L-homochirality. This is D-aminoacyl-tRNA deacylase from Clostridium kluyveri (strain ATCC 8527 / DSM 555 / NBRC 12016 / NCIMB 10680 / K1).